The primary structure comprises 361 residues: 3-dehydroquinate synthase (361 aa).

Residues 106–110 (GVVGD), 130–131 (TT), lysine 143, and lysine 152 contribute to the NAD(+) site. Zn(2+)-binding residues include glutamate 185, histidine 247, and histidine 264.

The protein belongs to the sugar phosphate cyclases superfamily. Dehydroquinate synthase family. The cofactor is NAD(+). It depends on Co(2+) as a cofactor. Zn(2+) is required as a cofactor.

It localises to the cytoplasm. It catalyses the reaction 7-phospho-2-dehydro-3-deoxy-D-arabino-heptonate = 3-dehydroquinate + phosphate. It participates in metabolic intermediate biosynthesis; chorismate biosynthesis; chorismate from D-erythrose 4-phosphate and phosphoenolpyruvate: step 2/7. Functionally, catalyzes the conversion of 3-deoxy-D-arabino-heptulosonate 7-phosphate (DAHP) to dehydroquinate (DHQ). This Gloeobacter violaceus (strain ATCC 29082 / PCC 7421) protein is 3-dehydroquinate synthase.